We begin with the raw amino-acid sequence, 252 residues long: Small ribosomal subunit protein eS1B (252 aa).

A2 carries the post-translational modification N-acetylalanine; partial. At S251 the chain carries Phosphoserine.

This sequence belongs to the eukaryotic ribosomal protein eS1 family. As to quaternary structure, component of the small ribosomal subunit (SSU). Mature yeast ribosomes consist of a small (40S) and a large (60S) subunit. The 40S small subunit contains 1 molecule of ribosomal RNA (18S rRNA) and at least 33 different proteins. The large 60S subunit contains 3 rRNA molecules (25S, 5.8S and 5S rRNA) and at least 46 different proteins. eS1 interacts directly with uS11 and eS26, which form part of the mRNA exit tunnel.

The protein localises to the cytoplasm. Component of the ribosome, a large ribonucleoprotein complex responsible for the synthesis of proteins in the cell. The small ribosomal subunit (SSU) binds messenger RNAs (mRNAs) and translates the encoded message by selecting cognate aminoacyl-transfer RNA (tRNA) molecules. The large subunit (LSU) contains the ribosomal catalytic site termed the peptidyl transferase center (PTC), which catalyzes the formation of peptide bonds, thereby polymerizing the amino acids delivered by tRNAs into a polypeptide chain. The nascent polypeptides leave the ribosome through a tunnel in the LSU and interact with protein factors that function in enzymatic processing, targeting, and the membrane insertion of nascent chains at the exit of the ribosomal tunnel. This Schizosaccharomyces pombe (strain 972 / ATCC 24843) (Fission yeast) protein is Small ribosomal subunit protein eS1B (rps102).